A 362-amino-acid polypeptide reads, in one-letter code: Inactive 2'-5' oligoadenylate synthetase 1C (362 aa).

The protein belongs to the 2-5A synthase family. In terms of tissue distribution, expressed at highest level in brain with lesser amounts in spleen, kidney, stomach, liver, intestine, ovary, skin and testis. Not detected in lung, thymus, heart and uterus.

Functionally, does not have 2'-5'-OAS activity, but can bind double-stranded RNA. In Mus musculus (Mouse), this protein is Inactive 2'-5' oligoadenylate synthetase 1C.